The sequence spans 235 residues: Chalcone--flavanone isomerase 1 (235 aa).

Substrate is bound by residues Thr50 and Ser192.

Belongs to the chalcone isomerase family.

The enzyme catalyses a chalcone = a flavanone.. It participates in secondary metabolite biosynthesis; flavonoid biosynthesis. In terms of biological role, catalyzes the intramolecular cyclization of bicyclic chalcones into tricyclic (S)-flavanones. Responsible for the isomerization of 4,2',4',6'-tetrahydroxychalcone (also termed chalcone) into naringenin. This is Chalcone--flavanone isomerase 1 (CHI1) from Chrysanthemum morifolium (Florist's daisy).